The sequence spans 205 residues: Dihydrofolate reductase (205 aa).

One can recognise a DHFR domain in the interval 1–201 (MLALVVALAS…TSFKMFLYTK (201 aa)). Residues Ala-7 and 13–19 (GIGNANA) contribute to the NADP(+) site. 29-34 (DMAWFR) provides a ligand contact to substrate. 62-64 (RRT) provides a ligand contact to NADP(+). Residue Arg-78 participates in substrate binding. Residues 84–86 (SRG) and 118–125 (GGRDVYSL) each bind NADP(+).

It belongs to the dihydrofolate reductase family.

It carries out the reaction (6S)-5,6,7,8-tetrahydrofolate + NADP(+) = 7,8-dihydrofolate + NADPH + H(+). Its pathway is cofactor biosynthesis; tetrahydrofolate biosynthesis; 5,6,7,8-tetrahydrofolate from 7,8-dihydrofolate: step 1/1. In terms of biological role, key enzyme in folate metabolism. Catalyzes an essential reaction for de novo glycine and purine synthesis, and for DNA precursor synthesis. This chain is Dihydrofolate reductase (DHFR-1), found in Encephalitozoon cuniculi (strain GB-M1) (Microsporidian parasite).